Consider the following 145-residue polypeptide: Large ribosomal subunit protein uL24 (145 aa).

Disordered regions lie at residues 1–21 and 122–145; these read MKFN…HFNA and KAKS…KMQE. Lys136 is covalently cross-linked (Glycyl lysine isopeptide (Lys-Gly) (interchain with G-Cter in SUMO2)). At Thr139 the chain carries Phosphothreonine.

Belongs to the universal ribosomal protein uL24 family. In terms of assembly, component of the large ribosomal subunit. Interacts with DHX33. In terms of processing, ufmylated by UFL1 in response to endoplasmic reticulum stress, promoting reticulophagy of endoplasmic reticulum sheets.

It localises to the cytoplasm. In terms of biological role, component of the large ribosomal subunit. The ribosome is a large ribonucleoprotein complex responsible for the synthesis of proteins in the cell. The sequence is that of Large ribosomal subunit protein uL24 (RPL26) from Bos taurus (Bovine).